Consider the following 612-residue polypeptide: Serine/threonine-protein kinase Nek1 (612 aa).

In terms of domain architecture, Protein kinase spans 4–258 (YEFLEQIGKG…ASDLLRHPHL (255 aa)). Residues 10 to 18 (IGKGSFGSA) and K33 contribute to the ATP site. The active-site Proton acceptor is the D129. Polar residues predominate over residues 503–513 (ISDGSSSSDQN). The tract at residues 503-534 (ISDGSSSSDQNATAGASSHTTSSSSRRCRFDP) is disordered. Low complexity predominate over residues 514–527 (ATAGASSHTTSSSS).

It belongs to the protein kinase superfamily. NEK Ser/Thr protein kinase family. NIMA subfamily.

It catalyses the reaction L-seryl-[protein] + ATP = O-phospho-L-seryl-[protein] + ADP + H(+). It carries out the reaction L-threonyl-[protein] + ATP = O-phospho-L-threonyl-[protein] + ADP + H(+). Functionally, may be involved in plant development processes. The polypeptide is Serine/threonine-protein kinase Nek1 (NEK1) (Arabidopsis thaliana (Mouse-ear cress)).